We begin with the raw amino-acid sequence, 1172 residues long: DNA-directed RNA polymerase subunit beta (1172 aa).

It belongs to the RNA polymerase beta chain family. As to quaternary structure, the RNAP catalytic core consists of 2 alpha, 1 beta, 1 beta' and 1 omega subunit. When a sigma factor is associated with the core the holoenzyme is formed, which can initiate transcription.

The enzyme catalyses RNA(n) + a ribonucleoside 5'-triphosphate = RNA(n+1) + diphosphate. Functionally, DNA-dependent RNA polymerase catalyzes the transcription of DNA into RNA using the four ribonucleoside triphosphates as substrates. This Thermosipho melanesiensis (strain DSM 12029 / CIP 104789 / BI429) protein is DNA-directed RNA polymerase subunit beta.